A 1966-amino-acid polypeptide reads, in one-letter code: Dedicator of cytokinesis protein 4 (1966 aa).

The region spanning 6–67 is the SH3 domain; the sequence is EHEKYGVVIA…PSSYVHLKNA (62 aa). Position 167 is a phosphotyrosine (Y167). The residue at position 193 (T193) is a Phosphothreonine. Residues 401-574 form the C2 DOCK-type domain; it reads RNDLYITIER…ESFCITSFLC (174 aa). Positions 1190–1596 constitute a DOCKER domain; sequence KTELNKEEMY…LGIQEFSACM (407 aa). S1599, S1607, S1614, S1618, S1620, and S1631 each carry phosphoserine. Disordered regions lie at residues 1648–1729 and 1742–1966; these read SQAS…IYPT and IGDG…VSQL. Positions 1672–1703 are enriched in low complexity; the sequence is PSPSTSSLSSTHSASPNVTSSAPSSARASPLL. Phosphoserine is present on S1769. The short motif at 1788-1794 is the SH3-binding element; sequence PPVPPRP. A compositionally biased stretch (polar residues) spans 1795–1809; it reads TQTASPARHTTSVSP. A compositionally biased stretch (low complexity) spans 1838–1863; that stretch reads SNSPVLSGSYSSGISSLSRCSTSETS. Over residues 1864–1873 the composition is skewed to polar residues; that stretch reads GFENQVNEQS. Residues 1941–1954 are compositionally biased toward basic and acidic residues; it reads SHLENGARRTDPGP.

Belongs to the DOCK family. Interacts with nucleotide-free Rap1; functions as a guanine nucleotide exchange factor (GEF) for Rap1. Interacts (via DOCKER domain) with RAC1; functions as a guanine nucleotide exchange factor (GEF) for RAC1. Interacts with the SH3 domain of CRK. Interacts with FASLG. Interacts with ELMO2 and EPHA2; mediates activation of RAC1 by EPHA2. Interacts with USH1C (via PDZ 1 domain). In terms of tissue distribution, widely expressed at low level. Highly expressed in skeletal muscle, prostate and ovary. As to expression, may be specifically expressed in the brain and eye.

It is found in the cell membrane. Its subcellular location is the cell projection. It localises to the cytoplasm. The protein localises to the cytosol. Its function is as follows. Functions as a guanine nucleotide exchange factor (GEF) that promotes the exchange of GDP to GTP, converting inactive GDP-bound small GTPases into their active GTP-bound form. Involved in regulation of adherens junction between cells. Plays a role in cell migration. Functionally, has a higher guanine nucleotide exchange factor activity compared to other isoforms. The polypeptide is Dedicator of cytokinesis protein 4 (DOCK4) (Homo sapiens (Human)).